The chain runs to 322 residues: Phosphatidylserine decarboxylase proenzyme (322 aa).

Active-site charge relay system; for autoendoproteolytic cleavage activity residues include D90, H147, and S254. The Schiff-base intermediate with substrate; via pyruvic acid; for decarboxylase activity role is filled by S254. At S254 the chain carries Pyruvic acid (Ser); by autocatalysis. The disordered stretch occupies residues 293–322 (PDAEPAPLPAEEIEAEHDASPLVDDKKDQV). The span at 308–322 (EHDASPLVDDKKDQV) shows a compositional bias: basic and acidic residues.

Belongs to the phosphatidylserine decarboxylase family. PSD-B subfamily. Prokaryotic type I sub-subfamily. In terms of assembly, heterodimer of a large membrane-associated beta subunit and a small pyruvoyl-containing alpha subunit. Pyruvate is required as a cofactor. Post-translationally, is synthesized initially as an inactive proenzyme. Formation of the active enzyme involves a self-maturation process in which the active site pyruvoyl group is generated from an internal serine residue via an autocatalytic post-translational modification. Two non-identical subunits are generated from the proenzyme in this reaction, and the pyruvate is formed at the N-terminus of the alpha chain, which is derived from the carboxyl end of the proenzyme. The autoendoproteolytic cleavage occurs by a canonical serine protease mechanism, in which the side chain hydroxyl group of the serine supplies its oxygen atom to form the C-terminus of the beta chain, while the remainder of the serine residue undergoes an oxidative deamination to produce ammonia and the pyruvoyl prosthetic group on the alpha chain. During this reaction, the Ser that is part of the protease active site of the proenzyme becomes the pyruvoyl prosthetic group, which constitutes an essential element of the active site of the mature decarboxylase.

Its subcellular location is the cell membrane. It carries out the reaction a 1,2-diacyl-sn-glycero-3-phospho-L-serine + H(+) = a 1,2-diacyl-sn-glycero-3-phosphoethanolamine + CO2. Its pathway is phospholipid metabolism; phosphatidylethanolamine biosynthesis; phosphatidylethanolamine from CDP-diacylglycerol: step 2/2. Its function is as follows. Catalyzes the formation of phosphatidylethanolamine (PtdEtn) from phosphatidylserine (PtdSer). This chain is Phosphatidylserine decarboxylase proenzyme, found in Escherichia coli O45:K1 (strain S88 / ExPEC).